The primary structure comprises 533 residues: Putative adhesin domain-containing protein LiaX (533 aa).

Positions 1–277 are binds the antibiotic daptomycin (DAP) and the antimicrobial peptide human LL-37, under physiologically relevant concentrations. Protects the OG1RF and S613 strains from LL-37-mediated killing in a concentration-dependent manner; it reads MKERERVLEL…EFNYPNPQAS (277 aa). A disordered region spans residues 63-89; sequence NALEKGESEGPTVDSFEENTQDSAEKD. Positions 83-186 form a coiled coil; it reads QDSAEKDREN…EEELKNIRKE (104 aa). Residues 279–526 form a putative adhesin region region; it reads IDVKVANGTV…INASTTTGSI (248 aa). The involved in cell membrane remodeling stretch occupies residues 289 to 526; the sequence is VFKTWDQEDV…INASTTTGSI (238 aa).

In terms of processing, may undergo proteolytic cleavage, allowing release of the N-terminal region into the extracellular environment.

The protein resides in the secreted. It is found in the cell wall. Its subcellular location is the cell membrane. Its function is as follows. Involved in cell membrane remodeling, perhaps acting by negative modulation of the liaFSR and liaXYZ gene clusters, thereby regulating content and localization of anionic phospholipids. Binds to the antibiotic daptomycin (DAP) and to cationic antimicrobial peptides, such as human LL-37, perhaps functioning as a sensor that activates the cell envelope stress response. The polypeptide is Putative adhesin domain-containing protein LiaX (Enterococcus faecalis (strain ATCC 700802 / V583)).